The sequence spans 146 residues: Snaclec agkisacutacin subunit B (146 aa).

Residues 1 to 23 (MGRFIFVSFGLLVVFLSLSGTAA) form the signal peptide. The C-type lectin domain maps to 24-146 (DCPSDWSSYE…TCSFVCKFQA (123 aa)). Cystine bridges form between cysteine 25–cysteine 36, cysteine 53–cysteine 142, and cysteine 119–cysteine 134. Ca(2+)-binding residues include serine 64 and glutamate 70.

This sequence belongs to the snaclec family. As to quaternary structure, heterodimer of subunits A and B; disulfide-linked. In terms of tissue distribution, expressed by the venom gland.

The protein resides in the secreted. Its function is as follows. Anticoagulant protein which binds to the gamma-carboxyglutamic acid-domain regions of factor IX (F9) and factor X (F10) in the presence of calcium with a 1 to 1 stoichiometry. Also inhibits platelet aggregation by binding to platelet glycoprotein Ibalpha (GP1BA) and functioning as a blocker of von Willebrand factor (VWF). Is devoid of hemorrhagic and lethal activities. Possesses antithrombotic and thrombolytic activities. Also hydrolyzes the Aalpha-chain of fibrinogen (FGA). Does not affect the Bbeta-chain (FGB) and the gamma chain (FGG). The polypeptide is Snaclec agkisacutacin subunit B (Deinagkistrodon acutus (Hundred-pace snake)).